Here is a 473-residue protein sequence, read N- to C-terminus: Trigger factor (473 aa).

The PPIase FKBP-type domain maps to 174-261 (GDIAVVSFKG…LKDLKEKELP (88 aa)). The tract at residues 437 to 473 (EISEKVTKSTTKSKTKSKTKKESQAKSEPNKKKKEKK) is disordered. A compositionally biased stretch (basic and acidic residues) spans 456 to 466 (KKESQAKSEPN).

It belongs to the FKBP-type PPIase family. Tig subfamily.

It localises to the cytoplasm. It catalyses the reaction [protein]-peptidylproline (omega=180) = [protein]-peptidylproline (omega=0). Its function is as follows. Involved in protein export. Acts as a chaperone by maintaining the newly synthesized protein in an open conformation. Functions as a peptidyl-prolyl cis-trans isomerase. The protein is Trigger factor of Prochlorococcus marinus (strain MIT 9515).